The sequence spans 282 residues: NAD(P)H-hydrate epimerase (282 aa).

Residues 1 to 53 (MSGLRTLLGLGLLVAGSRLPRIASRQSVCRAGPIWWGTQHRSSETMASAAVKY) constitute a mitochondrion transit peptide. A YjeF N-terminal domain is found at 59–269 (AQAVDEELFN…ALEKKYQLNL (211 aa)). 113-117 (NNGGD) lines the (6S)-NADPHX pocket. K(+) is bound at residue Asn-114. Lys-138 carries the post-translational modification N6-succinyllysine. Asp-179 provides a ligand contact to K(+). Residues 183-189 (GFSFKGD) and Asp-212 contribute to the (6S)-NADPHX site. Ser-215 provides a ligand contact to K(+).

The protein belongs to the NnrE/AIBP family. In terms of assembly, homodimer. Interacts with APOA1 and APOA2. Requires K(+) as cofactor. Undergoes physiological phosphorylation during sperm capacitation, downstream to PKA activation.

It localises to the mitochondrion. Its subcellular location is the secreted. It catalyses the reaction (6R)-NADHX = (6S)-NADHX. It carries out the reaction (6R)-NADPHX = (6S)-NADPHX. In terms of biological role, catalyzes the epimerization of the S- and R-forms of NAD(P)HX, a damaged form of NAD(P)H that is a result of enzymatic or heat-dependent hydration. This is a prerequisite for the S-specific NAD(P)H-hydrate dehydratase to allow the repair of both epimers of NAD(P)HX. Accelerates cholesterol efflux from endothelial cells to high-density lipoprotein (HDL) and thereby regulates angiogenesis. The chain is NAD(P)H-hydrate epimerase from Rattus norvegicus (Rat).